We begin with the raw amino-acid sequence, 129 residues long: RutC family protein PM1466 (129 aa).

This sequence belongs to the RutC family.

The protein is RutC family protein PM1466 of Pasteurella multocida (strain Pm70).